Reading from the N-terminus, the 497-residue chain is Serine hydroxymethyltransferase (497 aa).

(6S)-5,6,7,8-tetrahydrofolate contacts are provided by residues L176 and 180–182 (GHL). K289 carries the post-translational modification N6-(pyridoxal phosphate)lysine.

It belongs to the SHMT family. As to quaternary structure, homodimer. Pyridoxal 5'-phosphate serves as cofactor.

The protein resides in the cytoplasm. It carries out the reaction (6R)-5,10-methylene-5,6,7,8-tetrahydrofolate + glycine + H2O = (6S)-5,6,7,8-tetrahydrofolate + L-serine. Its pathway is one-carbon metabolism; tetrahydrofolate interconversion. It participates in amino-acid biosynthesis; glycine biosynthesis; glycine from L-serine: step 1/1. Catalyzes the reversible interconversion of serine and glycine with tetrahydrofolate (THF) serving as the one-carbon carrier. This reaction serves as the major source of one-carbon groups required for the biosynthesis of purines, thymidylate, methionine, and other important biomolecules. Also exhibits THF-independent aldolase activity toward beta-hydroxyamino acids, producing glycine and aldehydes, via a retro-aldol mechanism. The polypeptide is Serine hydroxymethyltransferase (Chlamydia abortus (strain DSM 27085 / S26/3) (Chlamydophila abortus)).